The primary structure comprises 136 residues: Cytochrome c oxidase subunit 13, mitochondrial (136 aa).

The transit peptide at 1–29 directs the protein to the mitochondrion; it reads MFAQRQMFFARLAANLRAPAVRQTVQRRF. The Mitochondrial matrix segment spans residues 30–62; the sequence is ASTPANESGKNAFVREREAVKQHAAETTELWRK. Residues 63–83 traverse the membrane as a helical segment; it reads ISLYGIPPALALAGYNAYTLY. Residues 84–136 are Mitochondrial intermembrane-facing; the sequence is NEHWEHWSHLPPLEERTEYPYQNIRTRNYPWGDGDKTLFWNESVNYHNRDKVT.

This sequence belongs to the cytochrome c oxidase subunit 6A family. As to quaternary structure, component of the cytochrome c oxidase (complex IV, CIV), a multisubunit enzyme composed of 11 subunits. The complex is composed of a catalytic core of 3 subunits Cox1, Cox2 and Cox3, encoded in the mitochondrial DNA, and 8 supernumerary subunits Cox4, Cox5a/Cox5, Cox6, Cox7, Cox8, Cox7a/Cox9, Cox6b/Cox12 and Cox6a/Cox13, which are encoded in the nuclear genome. The complex exists as a monomer or a dimer and forms respiratory supercomplexes (SCs) in the inner mitochondrial membrane with NADH-ubiquinone oxidoreductase (complex I, CI) and ubiquinol-cytochrome c oxidoreductase (cytochrome b-c1 complex, complex III, CIII), resulting in various different assemblies (supercomplexes I(1)IV(1), I(1)III(3)IV(2), III(2)IV(1) and III(2)IV(2) as well as larger supercomplexes of compositions like I(1)III(2)IV(5-6)). Cox6a/Cox13 was not present in the cryo-EM structure. It may be involved in complex IV dimer formation and might not be always expressed. This would explain its absence in the map of the isolated monomer.

Its subcellular location is the mitochondrion inner membrane. It participates in energy metabolism; oxidative phosphorylation. Component of the cytochrome c oxidase, the last enzyme in the mitochondrial electron transport chain which drives oxidative phosphorylation. The respiratory chain contains 3 multisubunit complexes succinate dehydrogenase (complex II, CII), ubiquinol-cytochrome c oxidoreductase (cytochrome b-c1 complex, complex III, CIII) and cytochrome c oxidase (complex IV, CIV), that cooperate to transfer electrons derived from NADH and succinate to molecular oxygen, creating an electrochemical gradient over the inner membrane that drives transmembrane transport and the ATP synthase. Cytochrome c oxidase is the component of the respiratory chain that catalyzes the reduction of oxygen to water. Electrons originating from reduced cytochrome c in the intermembrane space (IMS) are transferred via the dinuclear copper A center (CU(A)) of Cox2 and heme A of Cox1 to the active site in Cox1, a binuclear center (BNC) formed by heme A3 and copper B (CU(B)). The BNC reduces molecular oxygen to 2 water molecules using 4 electrons from cytochrome c in the IMS and 4 protons from the mitochondrial matrix. In Neurospora crassa (strain ATCC 24698 / 74-OR23-1A / CBS 708.71 / DSM 1257 / FGSC 987), this protein is Cytochrome c oxidase subunit 13, mitochondrial (eat-5).